Consider the following 411-residue polypeptide: MTKRPLGLGKKNKQKRHKPDEGADGKKESTPLDQIHVEVEGGGDPEDSVVQLKALWRNYLQSEREDERVLNGIVHECDRLLRNREQEGIELGEDFHSIYALALSELAIFRTEEKGQAGRESVGEFFDAAAERVDMGLQHFPASDVLALAKAKIIFQRIPLQYVSQLSPNNSEGADVGLQQLLEEGKSSFRVVAQDPLAVSEPLEIFSDLLEIIANFGREDEIDEGLDSDAEDEPEEVELPESHPLYELRQHLPEHAEWLQQQLLALFKVLEKPNAEEEESEATKFYRKIANKLGQSYLDAAAEPSIVFTTLTYETEDPSAEDEQKAQEAQRVAQGLTERAIEFFKEAESADDPQTWVDTAEVFISLGNLQENESETQEMLYKQAEEKMVRANKATNGKYKHILDTLLDSKT.

The interval 1–45 (MTKRPLGLGKKNKQKRHKPDEGADGKKESTPLDQIHVEVEGGGDP) is disordered. The span at 18–39 (KPDEGADGKKESTPLDQIHVEV) shows a compositional bias: basic and acidic residues.

The protein belongs to the ETT1 family.

Its subcellular location is the nucleus. Its function is as follows. Required for correct translation termination and probably involved in regulation of hypoxic gene expression. This is Enhancer of translation termination 1 (ETT1) from Eremothecium gossypii (strain ATCC 10895 / CBS 109.51 / FGSC 9923 / NRRL Y-1056) (Yeast).